A 437-amino-acid chain; its full sequence is Cysteine--tRNA ligase (437 aa).

Cys-31 contacts Zn(2+). Positions 33-43 match the 'HIGH' region motif; sequence PTVYNDLHLGN. The Zn(2+) site is built by Cys-205, His-230, and Glu-234. Positions 262-266 match the 'KMSKS' region motif; it reads KMSKS. Lys-265 contacts ATP.

This sequence belongs to the class-I aminoacyl-tRNA synthetase family. In terms of assembly, monomer. Requires Zn(2+) as cofactor.

Its subcellular location is the cytoplasm. It carries out the reaction tRNA(Cys) + L-cysteine + ATP = L-cysteinyl-tRNA(Cys) + AMP + diphosphate. This chain is Cysteine--tRNA ligase (cysS), found in Mycoplasma pneumoniae (strain ATCC 29342 / M129 / Subtype 1) (Mycoplasmoides pneumoniae).